The chain runs to 445 residues: Phosphoglucosamine mutase (445 aa).

The active-site Phosphoserine intermediate is the S102. S102, D241, D243, and D245 together coordinate Mg(2+). The residue at position 102 (S102) is a Phosphoserine.

The protein belongs to the phosphohexose mutase family. Mg(2+) serves as cofactor. In terms of processing, activated by phosphorylation.

It carries out the reaction alpha-D-glucosamine 1-phosphate = D-glucosamine 6-phosphate. Functionally, catalyzes the conversion of glucosamine-6-phosphate to glucosamine-1-phosphate. This chain is Phosphoglucosamine mutase, found in Klebsiella pneumoniae (strain 342).